Consider the following 229-residue polypeptide: Uracil-DNA glycosylase (229 aa).

The Proton acceptor role is filled by aspartate 70.

This sequence belongs to the uracil-DNA glycosylase (UDG) superfamily. UNG family.

The protein resides in the cytoplasm. It carries out the reaction Hydrolyzes single-stranded DNA or mismatched double-stranded DNA and polynucleotides, releasing free uracil.. Its function is as follows. Excises uracil residues from the DNA which can arise as a result of misincorporation of dUMP residues by DNA polymerase or due to deamination of cytosine. The protein is Uracil-DNA glycosylase of Chlamydia trachomatis serovar A (strain ATCC VR-571B / DSM 19440 / HAR-13).